The sequence spans 275 residues: Large ribosomal subunit protein uL2cz (275 aa).

2 disordered regions span residues 1 to 22 (MAIHLYKTSTPSTRNGAVDSQV) and 226 to 275 (NPVD…RRRK).

Belongs to the universal ribosomal protein uL2 family. In terms of assembly, part of the 50S ribosomal subunit.

The protein localises to the plastid. It is found in the chloroplast. The sequence is that of Large ribosomal subunit protein uL2cz (rpl2-A) from Chloranthus spicatus (Chulantree).